The chain runs to 335 residues: Dihydroorotate dehydrogenase (quinone) (335 aa).

Residues 59–63 (AGLDK) and Thr83 each bind FMN. Substrate is bound at residue Lys63. Residue 108–112 (NRMGF) coordinates substrate. FMN-binding residues include Asn136 and Asn169. Residue Asn169 coordinates substrate. Residue Ser172 is the Nucleophile of the active site. Asn174 serves as a coordination point for substrate. FMN-binding residues include Lys214 and Thr242. 243–244 (NT) serves as a coordination point for substrate. FMN contacts are provided by residues Gly265, Gly294, and 315 to 316 (YS).

Belongs to the dihydroorotate dehydrogenase family. Type 2 subfamily. In terms of assembly, monomer. FMN serves as cofactor.

It is found in the cell membrane. The enzyme catalyses (S)-dihydroorotate + a quinone = orotate + a quinol. It participates in pyrimidine metabolism; UMP biosynthesis via de novo pathway; orotate from (S)-dihydroorotate (quinone route): step 1/1. Catalyzes the conversion of dihydroorotate to orotate with quinone as electron acceptor. This chain is Dihydroorotate dehydrogenase (quinone), found in Neisseria meningitidis serogroup C / serotype 2a (strain ATCC 700532 / DSM 15464 / FAM18).